Here is a 242-residue protein sequence, read N- to C-terminus: Urease accessory protein UreF (242 aa).

This sequence belongs to the UreF family. As to quaternary structure, ureD, UreF and UreG form a complex that acts as a GTP-hydrolysis-dependent molecular chaperone, activating the urease apoprotein by helping to assemble the nickel containing metallocenter of UreC. The UreE protein probably delivers the nickel.

The protein resides in the cytoplasm. Required for maturation of urease via the functional incorporation of the urease nickel metallocenter. The protein is Urease accessory protein UreF of Bradyrhizobium diazoefficiens (strain JCM 10833 / BCRC 13528 / IAM 13628 / NBRC 14792 / USDA 110).